Reading from the N-terminus, the 364-residue chain is UDP-N-acetylglucosamine--N-acetylmuramyl-(pentapeptide) pyrophosphoryl-undecaprenol N-acetylglucosamine transferase (364 aa).

Residues 10-12 (TGG), asparagine 128, arginine 170, serine 199, isoleucine 250, and glutamine 295 each bind UDP-N-acetyl-alpha-D-glucosamine.

This sequence belongs to the glycosyltransferase 28 family. MurG subfamily.

The protein resides in the cell inner membrane. It catalyses the reaction di-trans,octa-cis-undecaprenyl diphospho-N-acetyl-alpha-D-muramoyl-L-alanyl-D-glutamyl-meso-2,6-diaminopimeloyl-D-alanyl-D-alanine + UDP-N-acetyl-alpha-D-glucosamine = di-trans,octa-cis-undecaprenyl diphospho-[N-acetyl-alpha-D-glucosaminyl-(1-&gt;4)]-N-acetyl-alpha-D-muramoyl-L-alanyl-D-glutamyl-meso-2,6-diaminopimeloyl-D-alanyl-D-alanine + UDP + H(+). Its pathway is cell wall biogenesis; peptidoglycan biosynthesis. Functionally, cell wall formation. Catalyzes the transfer of a GlcNAc subunit on undecaprenyl-pyrophosphoryl-MurNAc-pentapeptide (lipid intermediate I) to form undecaprenyl-pyrophosphoryl-MurNAc-(pentapeptide)GlcNAc (lipid intermediate II). This chain is UDP-N-acetylglucosamine--N-acetylmuramyl-(pentapeptide) pyrophosphoryl-undecaprenol N-acetylglucosamine transferase, found in Chlorobaculum parvum (strain DSM 263 / NCIMB 8327) (Chlorobium vibrioforme subsp. thiosulfatophilum).